The primary structure comprises 829 residues: Periplasmic nitrate reductase (829 aa).

Residues 1–29 (MKMTRRAFVKANAAASAAAVAGITLPASA) constitute a signal peptide (tat-type signal). The region spanning 41-97 (ITWDKAPCRFCGTGCSVLVGTQNGKVVATQGDPEAPVNKGLNCIKGYFLSKIMYGQD) is the 4Fe-4S Mo/W bis-MGD-type domain. [4Fe-4S] cluster is bound by residues Cys48, Cys51, Cys55, and Cys83. Mo-bis(molybdopterin guanine dinucleotide)-binding positions include Lys85, Gln152, Asn177, Cys181, 214-221 (WGSNMAEM), 245-249 (STYYH), 264-266 (QSD), Met374, Gln378, Asn484, 510-511 (SD), Lys533, Asp560, and 718-727 (TGRVLEHWHT). Position 794 (Phe794) interacts with substrate. Mo-bis(molybdopterin guanine dinucleotide) contacts are provided by Asn802 and Lys819.

This sequence belongs to the prokaryotic molybdopterin-containing oxidoreductase family. NasA/NapA/NarB subfamily. In terms of assembly, component of the periplasmic nitrate reductase NapAB complex composed of NapA and NapB. [4Fe-4S] cluster serves as cofactor. The cofactor is Mo-bis(molybdopterin guanine dinucleotide). In terms of processing, predicted to be exported by the Tat system. The position of the signal peptide cleavage has not been experimentally proven.

It localises to the periplasm. It carries out the reaction 2 Fe(II)-[cytochrome] + nitrate + 2 H(+) = 2 Fe(III)-[cytochrome] + nitrite + H2O. In terms of biological role, catalytic subunit of the periplasmic nitrate reductase complex NapAB. Receives electrons from NapB and catalyzes the reduction of nitrate to nitrite. This chain is Periplasmic nitrate reductase, found in Vibrio campbellii (strain ATCC BAA-1116).